We begin with the raw amino-acid sequence, 192 residues long: MGKPALILASQSPRRRDILSLTLIPFETMAIETRETLDPTSSIEENVTKIALEKAECAAALLPKQNGKTIILTADTVVAKGNRIYGKPAGFDEAFEMLKSLQNRSHRVYTGFVLLCCDKIHTECVTTTVELEPMSDNEIKRYILSEKPYDKAGSYGIQDPLMACYIRRIEGCYHNVVGLPLSRVCKALKTFL.

Aspartate 75 acts as the Proton acceptor in catalysis.

It belongs to the Maf family. YhdE subfamily. The cofactor is a divalent metal cation.

The protein localises to the cytoplasm. It catalyses the reaction dTTP + H2O = dTMP + diphosphate + H(+). It carries out the reaction UTP + H2O = UMP + diphosphate + H(+). Its function is as follows. Nucleoside triphosphate pyrophosphatase that hydrolyzes dTTP and UTP. May have a dual role in cell division arrest and in preventing the incorporation of modified nucleotides into cellular nucleic acids. The protein is dTTP/UTP pyrophosphatase of Pelodictyon phaeoclathratiforme (strain DSM 5477 / BU-1).